The following is a 381-amino-acid chain: Nitric oxide reductase FlRd-NAD(+) reductase (381 aa).

Belongs to the FAD-dependent oxidoreductase family. FAD serves as cofactor.

Its subcellular location is the cytoplasm. It catalyses the reaction 2 reduced [nitric oxide reductase rubredoxin domain] + NAD(+) + H(+) = 2 oxidized [nitric oxide reductase rubredoxin domain] + NADH. The protein operates within nitrogen metabolism; nitric oxide reduction. In terms of biological role, one of at least two accessory proteins for anaerobic nitric oxide (NO) reductase. Reduces the rubredoxin moiety of NO reductase. The protein is Nitric oxide reductase FlRd-NAD(+) reductase of Aliivibrio fischeri (strain ATCC 700601 / ES114) (Vibrio fischeri).